Reading from the N-terminus, the 420-residue chain is DNA repair protein RadA (420 aa).

62 to 69 is an ATP binding site; that stretch reads GDPGIGKS. Positions 218-222 match the RadA KNRFG motif motif; the sequence is KNRFG. A lon-protease-like region spans residues 317-420; sequence DAYLKSAGGV…IQEVLKKVFA (104 aa).

This sequence belongs to the RecA family. RadA subfamily.

Its function is as follows. Plays a role in repairing double-strand DNA breaks, probably involving stabilizing or processing branched DNA or blocked replication forks. Required for efficient transformation with chromosomal (linear) DNA, but not for replicative plasmid DNA. Its increased sensitivity to a DNA damaging agent suggests it may be required for DNA repair. In Streptococcus pneumoniae (strain ATCC BAA-255 / R6), this protein is DNA repair protein RadA.